A 551-amino-acid polypeptide reads, in one-letter code: Endolytic murein transglycosylase (551 aa).

Topologically, residues 1–187 (MSEKSREEEK…PKKEKKSHVK (187 aa)) are cytoplasmic. The disordered stretch occupies residues 38 to 180 (VRTPANEPSA…EGAKPAKPKK (143 aa)). Composition is skewed to low complexity over residues 100 to 110 (PSSPAEESGSR) and 145 to 157 (QAGPETPTPATET). Basic and acidic residues predominate over residues 159–174 (DIIRDTSRRSRREGAK). The chain crosses the membrane as a helical span at residues 188–208 (AFVISFLVFLALLSAGGYFGY). The Extracellular segment spans residues 209–551 (QYVLDSLLPI…VAEHVNSKLN (343 aa)).

Belongs to the transglycosylase MltG family.

It is found in the cell membrane. The catalysed reaction is a peptidoglycan chain = a peptidoglycan chain with N-acetyl-1,6-anhydromuramyl-[peptide] at the reducing end + a peptidoglycan chain with N-acetylglucosamine at the non-reducing end.. In terms of biological role, functions as a peptidoglycan terminase that cleaves nascent peptidoglycan strands endolytically to terminate their elongation. Involved in peripheral peptidoglycan (PG) synthesis. This is Endolytic murein transglycosylase from Streptococcus pneumoniae serotype 2 (strain D39 / NCTC 7466).